A 217-amino-acid chain; its full sequence is Putative N-acetylmuramoyl-L-alanine amidase (217 aa).

One can recognise a MurNAc-LAA domain in the interval 3 to 206; it reads IAIDAGHGGQ…ISKSISIALK (204 aa).

The protein belongs to the N-acetylmuramoyl-L-alanine amidase 3 family.

The protein resides in the secreted. The catalysed reaction is Hydrolyzes the link between N-acetylmuramoyl residues and L-amino acid residues in certain cell-wall glycopeptides.. Its function is as follows. Cell-wall hydrolase involved in septum cleavage during cell division. The sequence is that of Putative N-acetylmuramoyl-L-alanine amidase (amiB) from Buchnera aphidicola subsp. Baizongia pistaciae (strain Bp).